The chain runs to 376 residues: Putative F-box protein At3g18330 (376 aa).

One can recognise an F-box domain in the interval 1–46 (MPMPNLPKELVEEILSFVPATYLKRLSATCKPWNRLIHNDKRFARK).

This Arabidopsis thaliana (Mouse-ear cress) protein is Putative F-box protein At3g18330.